The following is a 299-amino-acid chain: Nucleophosmin (299 aa).

The span at 125 to 134 (ESSDDEDEEH) shows a compositional bias: acidic residues. The tract at residues 125-247 (ESSDDEDEEH…TPKTPLSSEE (123 aa)) is disordered. A Nuclear localization signal motif is present at residues 153 to 158 (PRKKTR). Positions 160–187 (EEEEEDSDEDDDDDEDDDDEDDDEEEEE) are enriched in acidic residues. The segment covering 188–197 (TPVKKTDSTK) has biased composition (basic and acidic residues). A Nuclear localization signal motif is present at residues 189-195 (PVKKTDS). Repeats lie at residues 218–220 (KTP), 221–223 (KTP), 237–239 (KTP), and 240–242 (KTP). Residues 218 to 242 (KTPKTPEQKGKQDTKPQTPKTPKTP) form a 4 X 3 AA repeats of K-T-P region. Basic and acidic residues predominate over residues 221–231 (KTPEQKGKQDT). Over residues 232–242 (KPQTPKTPKTP) the composition is skewed to low complexity.

It belongs to the nucleoplasmin family. Decamer formed by two pentameric rings associated in a head-to-head fashion. Post-translationally, phosphorylated.

The protein localises to the cytoplasm. Its subcellular location is the nucleus. It is found in the nucleoplasm. It localises to the nucleolus. Acts as a chaperonin for the core histones H3, H2B and H4. Associated with nucleolar ribonucleoprotein structures and bind single-stranded nucleic acids. It may function in the assembly and/or transport of ribosome. May stimulate endonuclease activity on apurinic/apyrimidinic (AP) double-stranded DNA. May inhibit endonuclease activity on AP single-stranded RNA. The sequence is that of Nucleophosmin (npm1) from Xenopus laevis (African clawed frog).